A 107-amino-acid chain; its full sequence is Flagellar transcriptional regulator FlhD (107 aa).

It belongs to the FlhD family. In terms of assembly, homodimer; disulfide-linked. Forms a heterohexamer composed of two FlhC and four FlhD subunits. Each FlhC binds a FlhD dimer, forming a heterotrimer, and a hexamer assembles by dimerization of two heterotrimers.

It localises to the cytoplasm. Functions in complex with FlhC as a master transcriptional regulator that regulates transcription of several flagellar and non-flagellar operons by binding to their promoter region. Activates expression of class 2 flagellar genes, including fliA, which is a flagellum-specific sigma factor that turns on the class 3 genes. Also regulates genes whose products function in a variety of physiological pathways. The chain is Flagellar transcriptional regulator FlhD from Bordetella pertussis (strain Tohama I / ATCC BAA-589 / NCTC 13251).